We begin with the raw amino-acid sequence, 238 residues long: Cysteine-rich venom protein pseudechetoxin-like (238 aa).

The signal sequence occupies residues 1–19 (MIAFLVLLSLAAVLQQSSG). A propeptide spanning residues 20–28 (TVDFASESS) is cleaved from the precursor. Residues 38 to 164 (VDKHNDLRRS…STKYLYVCQY (127 aa)) enclose the SCP domain. Disulfide bonds link cysteine 75–cysteine 153, cysteine 92–cysteine 165, cysteine 148–cysteine 162, cysteine 184–cysteine 191, cysteine 187–cysteine 196, cysteine 200–cysteine 233, cysteine 209–cysteine 227, and cysteine 218–cysteine 231. In terms of domain architecture, ShKT spans 200 to 233 (CKHNDDLSNCKTLVKKHKCQTEWIKSKCPATCFC).

Belongs to the CRISP family. As to expression, expressed by the venom gland.

The protein resides in the secreted. Its function is as follows. Blocks olfactory (CNGA2) and retinal (CNGA1) CNG channel currents. Does not affect neither depolarization- nor caffeine-induced contraction of smooth muscle. This is Cysteine-rich venom protein pseudechetoxin-like from Pseudonaja textilis (Eastern brown snake).